The following is a 454-amino-acid chain: Protein IQ-DOMAIN 1 (454 aa).

Positions 103–113 are calmodulin-binding; sequence GKSKEEAAAIL. In terms of domain architecture, IQ spans 107 to 136; sequence EEAAAILIQSTFRGHLARRESQVMRGQERL. Residues 272–454 are disordered; it reads WESSEKEQNT…KGVLKAERTP (183 aa). Residues 280–328 are compositionally biased toward polar residues; the sequence is NTTNNDNSSVKNSTNRNSQGGETAKSSNRNKLNSSTKPNTPSASSTATR. The span at 343 to 356 shows a compositional bias: basic and acidic residues; it reads KSSDDEAKSSERNR. Positions 371-388 are enriched in polar residues; that stretch reads LSSSTARRSSNLIPTTKS. Residues 397 to 412 are compositionally biased toward low complexity; the sequence is TSSRVAVTTSTTEESS. Residues 421–428 carry the Nuclear localization signal motif; that stretch reads KKRLSTSA. Residues 442–454 are compositionally biased toward basic and acidic residues; sequence KVEKGVLKAERTP.

Belongs to the IQD family. Binds to multiple calmodulin (CaM) in the presence of Ca(2+)(e.g. CaM1 and CaM2) and CaM-like (e.g. CML8 and CML9) proteins. Interacts with KLCR1. As to expression, expressed in roots, flowers, stems, siliques, inflorescence stems and whole shoots. Restricted to the vascular bundles.

It localises to the nucleus. The protein localises to the nucleolus. It is found in the cytoplasm. Its subcellular location is the cytoskeleton. May be involved in cooperative interactions with calmodulins or calmodulin-like proteins. Modulates expression of glucosinolate pathway genes. May associate with nucleic acids and regulate gene expression at the transcriptional or post-transcriptional level. Recruits KLCR1 and calmodulin proteins to microtubules, thus being a potential scaffold in cellular signaling and trafficking. The chain is Protein IQ-DOMAIN 1 from Arabidopsis thaliana (Mouse-ear cress).